A 221-amino-acid polypeptide reads, in one-letter code: Serine/arginine-rich splicing factor 2 (221 aa).

An RRM domain is found at 14–92 (TSLKVDNLTY…RELRVQMARY (79 aa)). Residues 91–221 (RYGRPPDSHH…SPEEEGAVSS (131 aa)) are disordered. Composition is skewed to basic residues over residues 117–171 (RRSR…RSKS) and 179–189 (SRSRSRSRSRS).

It belongs to the splicing factor SR family. Post-translationally, extensively phosphorylated on serine residues in the RS domain.

Its subcellular location is the nucleus. Its function is as follows. Necessary for the splicing of pre-mRNA. It is required for formation of the earliest ATP-dependent splicing complex and interacts with spliceosomal components bound to both the 5'- and 3'-splice sites during spliceosome assembly. It also is required for ATP-dependent interactions of both U1 and U2 snRNPs with pre-mRNA. The protein is Serine/arginine-rich splicing factor 2 (SRSF2) of Gallus gallus (Chicken).